Here is a 241-residue protein sequence, read N- to C-terminus: ATP synthase subunit a (241 aa).

Transmembrane regions (helical) follow at residues 30–50 (GQVF…VVVG), 91–111 (FIGT…LVPW), 128–148 (INTT…AGLS), 193–213 (LVVA…VMFL), and 214–234 (GLFT…YYIG).

Belongs to the ATPase A chain family. In terms of assembly, F-type ATPases have 2 components, CF(1) - the catalytic core - and CF(0) - the membrane proton channel. CF(1) has five subunits: alpha(3), beta(3), gamma(1), delta(1), epsilon(1). CF(0) has four main subunits: a, b, b' and c.

The protein resides in the cellular thylakoid membrane. In terms of biological role, key component of the proton channel; it plays a direct role in the translocation of protons across the membrane. This is ATP synthase subunit a from Prochlorococcus marinus (strain MIT 9211).